A 652-amino-acid polypeptide reads, in one-letter code: DNA ligase (652 aa).

NAD(+) contacts are provided by residues 29–33 (DAEYD), 78–79 (SL), and Glu107. The active-site N6-AMP-lysine intermediate is the Lys109. The NAD(+) site is built by Arg130, Glu164, Lys278, and Lys302. Zn(2+)-binding residues include Cys395, Cys398, Cys413, and Cys418. The 76-residue stretch at 577-652 (TDDAILSGKT…VKDEAWLLDL (76 aa)) folds into the BRCT domain.

The protein belongs to the NAD-dependent DNA ligase family. LigA subfamily. Mg(2+) serves as cofactor. Mn(2+) is required as a cofactor.

It catalyses the reaction NAD(+) + (deoxyribonucleotide)n-3'-hydroxyl + 5'-phospho-(deoxyribonucleotide)m = (deoxyribonucleotide)n+m + AMP + beta-nicotinamide D-nucleotide.. In terms of biological role, DNA ligase that catalyzes the formation of phosphodiester linkages between 5'-phosphoryl and 3'-hydroxyl groups in double-stranded DNA using NAD as a coenzyme and as the energy source for the reaction. It is essential for DNA replication and repair of damaged DNA. The sequence is that of DNA ligase from Streptococcus thermophilus (strain ATCC BAA-491 / LMD-9).